A 232-amino-acid polypeptide reads, in one-letter code: Phosphate-specific transport system accessory protein PhoU homolog 1 (232 aa).

Belongs to the PhoU family. Homodimer.

The protein resides in the cytoplasm. Functionally, plays a role in the regulation of phosphate uptake. The polypeptide is Phosphate-specific transport system accessory protein PhoU homolog 1 (phoU1) (Thermotoga maritima (strain ATCC 43589 / DSM 3109 / JCM 10099 / NBRC 100826 / MSB8)).